A 243-amino-acid polypeptide reads, in one-letter code: Tyrosine recombinase XerD-like (243 aa).

A Core-binding (CB) domain is found at 1–72; the sequence is MKQAIESFIQ…AVNQFLYFLY (72 aa). A Tyr recombinase domain is found at 91 to 243; that stretch reads SVKKKLERED…KTSMSLEKFR (153 aa). Catalysis depends on residues lysine 149 and arginine 210.

This sequence belongs to the 'phage' integrase family. XerD-like subfamily.

Its subcellular location is the cytoplasm. Functionally, putative tyrosine recombinase. Not involved in the cutting and rejoining of the recombining DNA molecules on dif(SL) site. This is Tyrosine recombinase XerD-like from Streptococcus suis (strain 98HAH33).